The sequence spans 24 residues: MTRSLKKNPFVANHLLNKIDKLNT.

The protein belongs to the universal ribosomal protein uS19 family.

The protein localises to the plastid. The protein resides in the chloroplast. In terms of biological role, protein S19 forms a complex with S13 that binds strongly to the 16S ribosomal RNA. The chain is Small ribosomal subunit protein uS19c (rps19) from Petunia hybrida (Petunia).